The chain runs to 58 residues: Small ribosomal subunit protein bS21 (58 aa).

This sequence belongs to the bacterial ribosomal protein bS21 family.

The chain is Small ribosomal subunit protein bS21 from Prochlorococcus marinus (strain MIT 9301).